A 3470-amino-acid polypeptide reads, in one-letter code: MRGPHWRVPWLCLSCLYSCLLLLPDALATTSTQTPMSLSSSTRTSQMSSQASTSSTSSDRRTSKTEQTSTRDTPSSITTVSQSHHTTSMETSKPQTTTTTEVTTSTPSASSRDQIQTETSSQRTISPDGTTTSHAPSISSSAPSTTHMLTTTSSTESTSVDSGHTTAITTQGLTPATAQVSLTPSSQNMSTVSTPITSTLTQRQHTGSKQTSSKSQVNIVTSTLSTSTSDSTPAQTMSQVTSSSDKRTKPSTSGVSSTSLTTTEVLTQTSSTDSAPGNTTLRITQNSTTHTTKVSTTSTPQKLSPVSTLINSSQKMSTLPQNQHTESMDTSRQPQTTTTIEVTTSTPSASSLHQIQTETNSPKTISPGETTTSHAPNMRSSPPKTSQILTTMPSTKSTSVDTKQTKAITTKVSTPDTTQVSMTPSSQKLPTHSTSTQELTSSYSQHIQSKGTSSKSQTTTNTKVNTSTPSASSRDKIQTETSSQRTNSPGEKRTSHAPSMSSSAPSTTHMLSTTSSNQSTSVDTGQTTSVTAQGSTPAITQTSLTPSSQNTSTVSTPITSTHKLSTLSQSQHTGSKGTSSNPQTTTTTEVTTSTPSATTHDQIQTETSSQNTISPGETTTSYAPIMSSSAPSTTHMLSTTSSTQSTSVDTRHTTTLTNQGSTPATTQVSPSSQNMSTVSAPITSTQILSTFPQSQHTGSKGTSSNPQTTTTPVVTTSNPSATSRDQIQTETSSQRTISPGETTTSYASIMSSSAPSTTHMLTTTSSTQSTSVDTRHTIAVRTQGSTPATTQVSPSSQNMSTVSTPITSTQILSTLPQSQHTGSKGTSSNPQTTTSPVVTTSTPSGTSGDQIQTETSSQRTISPGKTTTSHALNINSSAPSTTHMLSTTSSTQSTSGDTRHTTAGRTQGSTPATTQVSPSSQNMSTVSAPITSIQMLSTLPQSQHTESKSTSTNPQTTTTPEVTTSNPSATSHDQIETETSSQRTISPGETTTSYAPIMSSSAPSTTHMLSTTSSTQSTSVDTRNTTTLTTQGSTPATTQVSPSSKNMSTVSTPITSTHKLSTLPQSQHTGSNGTSSSSSTPATHRSHLHPNMSTVSTPITTTHKLSTLSQSQHTGSKGTSSNPQTTTTPVMTTSTPSATTHDQIQTETSSQRTISHGETTTSYAPIMSSSAPSTTHMLSTASSTQITSVDTRHTTAITTQGSTPATTQVSPSSQNMSTVSAPITSIQILSTLPQSQHTGSKGTSTNPQTTTTPEVTTSTPSATSRDQIQTETSSQRTISPGETTTSHAPIMSSSAPSTTHMLSTTSSTQSTSVDTRHTTAGRTQGSTPATTQVSPSSQNMTTTSHALMSSSAPSTTHMLSTTSSTQSTSVDTRHTTTVTTQGSTPATTQVLPSSQNMSTVSAPITSTQILSTLPQSQHTGSKGTSTNPQTTTNAEVTTSTPSATSHDQIETETSSQRTISPGETTTSHAPNMSSSAPSTTHMLSSTSSTQITSVDTGHTSAGRTQGSTPATTQVSPSSQNMSTVSAPITSTHILSTLPKSQHTGSKGTSSNPQTTITPVVTTSTPSASSRDQIQTETSFQRTISPGETTTSHAPSMSSSAPSSTHMLSTASSTQITSVDTRHTTAITTQGSTPATTQVSPSSQNMSTVSAPITSIQMLSTLPQSQHTESKSTSTNPQTTTTPRVTTSTPSASSRDQIQTETSSQRTISPGKTTTSHVPNMNSSAPSTTHILSTTSSIQSTSGDTRHTTAVRTQGSTPATTQVSLAPSSQNMSTLSAPITSPQHFSTLPQNQHTGSMGTSSNPQSTTIPEVTTSTLSASSRDQVQTETSSQRTISPGETTTSHASSLSSSAPSSTHMLSTASSTEITSGDTRHTTAIVTQGSTPATTQTTLTPSSQNMSTVSTPITSTHKLSPLPQSQHTENMGTSSNPQTTTTPEVTTSTPSATSYDQIQTETSFQRTISPGETTTSHAPSMSNSAPSSTHKLSTASSTEITSVDTRHTIAITTQGSTLATTQTSLTPSSQNMSTVSAPITSSQILSTLRQSQHTGSKGTSSNHQTTTTPVVTTSTSSATSRDQIQTETSSLRTISPDGTTTSHASSMSSSSPNTTHLLITTSSTESTSVDTGYSTVITTHGSTLATTQVSLTPSSQNMSTVSMPSTSSQELTSLPQRQHTGNMETSSQPQNITPTVVTTSTLLSFSRGSTELQTMSWGTSSSGTINTLSTPVRNTSPASTSGILTSTLTTSGNTGYTGVTRSLGVITSRVTSTSLPGKSTVVHSTPAQPLSAHSQSHQTYGTGTPSMSQTSILPDMTSEKRVASSPGPTVTESFSHVSSSSGLTTKTDNDRNTAVSATSSTLTSPSPTTASRSTVPLPSLLPDQGISLFPYGSEVGDQNLFARTVDFNSPIFKILIGFPLGSSLRDSFYVTDNGQIIFPESDYDVFSYPNPPQRGFTGRERVAMVAPFWADADFSSSRGAIFYQEYVTFYNEHHQLIREVETLINDFTSSWGYRAKWTLKVTWVNVPAYTAQESFGTNTYQAILSTDGSRSYALFLYQNSGMRWDVTQEPYNRVLMGFSSGDGYFENSPLTFRPAMEKYRPDRFLNSKLGIRGLQVYRLHREERPNYRLKCLQWLESQPQQPSWGWSSVSCPCSWQQGQRDFRFRPINPGWWDRQLCSFSSGRGGVCCSYGAWGEFREGWRMHSPWQFDEEQEAQNWCCQWNDKPSFCVWYQLRRPRVSCAGYRPPRPAWTFGDPHITTLDNANFTFNGLGDFLLVQAQDRNSSFLLEGRTAQTGTAKATNFIAFAAQYNTSSLKSPITVQWFLEPSDKIRVVYNNQTVAFNTRDTEVLPIFNTTGVLLTQNGSQVSANFDGTVTISVIARSNILHASSSLSEEYRNHTEGLLGVWNDNPEDDFRMPNGSTIPSNSSEETLFYYGMTWHVNGTGLLGIRADPLPTKFTPIFLSQLLNQSASGEDLASGCKGDRKCMFDILATGNRTIGQSTNSILNEFQHMNDTLNQYPPSINCSSKIQAYKGQTVTTEITSNSKDATLSLSKKCSGFKLFENGSLQWTPTSPEACTLEILARDVRTNLSWVLQPKTVACFCSKEEQCLYNETSKEGNSSLEVTSCKCDGDTFGRLCERSKDPCDEPCFPNVNCIPGKGCEACPPNTTGDGRHCAALEDSCPNRSCPMNYCYNNGHCDISEAPGCQPTCTCPPAFTDNRCFLAGNSFTPTISMELPLRTIVLSLREDENASAADVNASVANILENLDMRAFFSNSLVELIRTSPGAQPSSKSIHHWKVTSHFKYRPRGPLIHYLNNQLIGAVMEAFLLQARQERQKRSGEARKDVHFFPISRADVQDQMALNLSMLEEYFTCDGYKGYHLVYSPQDGVTCVSPCSEGYCHNGGQCKHLPDGPQCSCASFTIYSSSGEHCEHLSVKLGAFYGILFGTLGALLLLGILAFMIFHFCGCSKNKFSYPLDSEL.

Residues methionine 1 to alanine 28 form the signal peptide. Residues threonine 32 to glycine 163 form a disordered region. Residues serine 37–serine 57 are compositionally biased toward low complexity. 24 O-linked (GalNAc...) threonine glycosylation sites follow: threonine 42, threonine 44, threonine 65, threonine 68, threonine 87, threonine 91, threonine 96, threonine 97, threonine 98, threonine 99, threonine 100, threonine 103, threonine 104, threonine 106, threonine 117, threonine 130, threonine 131, threonine 132, threonine 145, threonine 146, threonine 150, threonine 151, threonine 152, and threonine 155. The tract at residues arginine 43–serine 2501 is variable number of tandem repeats (VNTR). Polar residues predominate over residues glutamate 66–histidine 85. The span at threonine 86–serine 111 shows a compositional bias: low complexity. A compositionally biased stretch (polar residues) spans arginine 112–glycine 129. Residues threonine 130–serine 162 are compositionally biased toward low complexity. Asparagine 188 is a glycosylation site (N-linked (GlcNAc...) asparagine). Polar residues predominate over residues threonine 199–valine 220. 7 disordered regions span residues threonine 199–serine 679, phenylalanine 691–threonine 925, threonine 938–valine 1219, leucine 1232–valine 1400, leucine 1413–valine 1524, leucine 1537–threonine 1647, and threonine 1660–threonine 1992. Low complexity predominate over residues threonine 221 to threonine 232. The segment covering proline 233–serine 243 has biased composition (polar residues). O-linked (GalNAc...) threonine glycans are attached at residues threonine 236 and threonine 241. The segment covering serine 251–threonine 272 has biased composition (low complexity). Residues aspartate 273–isoleucine 283 show a composition bias toward polar residues. N-linked (GlcNAc...) asparagine glycans are attached at residues asparagine 278 and asparagine 286. Low complexity predominate over residues threonine 284–threonine 299. Threonine 297 carries an O-linked (GalNAc...) threonine glycan. The segment covering proline 300–glutamine 335 has biased composition (polar residues). Residue asparagine 311 is glycosylated (N-linked (GlcNAc...) asparagine). The segment covering threonine 336–threonine 346 has biased composition (low complexity). Residues proline 347–glutamine 448 show a composition bias toward polar residues. Threonine 357, threonine 370, threonine 371, threonine 372, threonine 385, and threonine 423 each carry an O-linked (GalNAc...) threonine glycan. Residues serine 449 to serine 470 show a composition bias toward low complexity. Asparagine 465 is a glycosylation site (N-linked (GlcNAc...) asparagine). A compositionally biased stretch (polar residues) spans threonine 479–proline 489. Threonine 494 is a glycosylation site (O-linked (GalNAc...) threonine). A compositionally biased stretch (low complexity) spans histidine 496 to methionine 510. Residues leucine 511–glycine 577 are compositionally biased toward polar residues. O-linked (GalNAc...) threonine glycosylation is present at threonine 513. An N-linked (GlcNAc...) asparagine glycan is attached at asparagine 517. Threonine 542 and threonine 545 each carry an O-linked (GalNAc...) threonine glycan. Asparagine 550 is a glycosylation site (N-linked (GlcNAc...) asparagine). 18 O-linked (GalNAc...) threonine glycosylation sites follow: threonine 551, threonine 584, threonine 585, threonine 586, threonine 587, threonine 588, threonine 592, threonine 594, threonine 599, threonine 605, threonine 618, threonine 619, threonine 620, threonine 633, threonine 634, threonine 639, threonine 640, and threonine 655. Over residues threonine 578–threonine 599 the composition is skewed to low complexity. Residues histidine 600 to proline 631 show a composition bias toward polar residues. The segment covering serine 632–serine 647 has biased composition (low complexity). 2 stretches are compositionally biased toward polar residues: residues threonine 653–serine 679 and phenylalanine 691–glycine 701. The N-linked (GlcNAc...) asparagine glycan is linked to asparagine 674. Residues threonine 702, threonine 708, threonine 709, threonine 710, threonine 711, and threonine 716 are each glycosylated (O-linked (GalNAc...) threonine). A compositionally biased stretch (low complexity) spans threonine 702–serine 723. Asparagine 718 carries N-linked (GlcNAc...) asparagine glycosylation. Positions arginine 724–glutamate 741 are enriched in polar residues. A compositionally biased stretch (low complexity) spans threonine 742–valine 772. Threonine 743, threonine 744, threonine 757, and threonine 758 each carry an O-linked (GalNAc...) threonine glycan. Positions valine 780 to lysine 824 are enriched in polar residues. An N-linked (GlcNAc...) asparagine glycan is attached at asparagine 798. Residues glycine 825–glycine 848 show a composition bias toward low complexity. O-linked (GalNAc...) threonine glycosylation is found at threonine 826, threonine 832, threonine 833, threonine 834, threonine 839, threonine 840, threonine 842, threonine 846, and threonine 853. Residues aspartate 849–proline 879 are compositionally biased toward polar residues. A glycan (N-linked (GlcNAc...) asparagine) is linked at asparagine 875. Over residues serine 880–serine 895 the composition is skewed to low complexity. Residues threonine 901 and threonine 902 are each glycosylated (O-linked (GalNAc...) threonine). Over residues threonine 901–threonine 925 the composition is skewed to polar residues. Asparagine 922 carries N-linked (GlcNAc...) asparagine glycosylation. Over residues lysine 948–serine 968 the composition is skewed to low complexity. Residues threonine 950, threonine 952, threonine 956, threonine 957, threonine 958, threonine 959, threonine 963, and threonine 964 are each glycosylated (O-linked (GalNAc...) threonine). Asparagine 966 is a glycosylation site (N-linked (GlcNAc...) asparagine). Residues alanine 969 to proline 1003 show a composition bias toward polar residues. Residues threonine 990, threonine 991, threonine 992, threonine 1005, threonine 1006, threonine 1011, threonine 1012, and threonine 1015 are each glycosylated (O-linked (GalNAc...) threonine). Residues serine 1004–serine 1019 are compositionally biased toward low complexity. Residues valine 1020–glutamine 1065 are compositionally biased toward polar residues. The N-linked (GlcNAc...) asparagine glycan is linked to asparagine 1024. 5 O-linked (GalNAc...) threonine glycosylation sites follow: threonine 1025, threonine 1026, threonine 1027, threonine 1029, and threonine 1038. Residues asparagine 1046, asparagine 1072, and asparagine 1091 are each glycosylated (N-linked (GlcNAc...) asparagine). The segment covering serine 1066–threonine 1083 has biased composition (low complexity). A compositionally biased stretch (polar residues) spans asparagine 1091 to serine 1120. A compositionally biased stretch (low complexity) spans serine 1121 to threonine 1140. O-linked (GalNAc...) threonine glycosylation is found at threonine 1125, threonine 1126, threonine 1127, threonine 1128, threonine 1132, threonine 1133, threonine 1135, threonine 1140, threonine 1174, threonine 1198, and threonine 1207. Composition is skewed to polar residues over residues histidine 1141 to valine 1219 and leucine 1232 to glycine 1242. N-linked (GlcNAc...) asparagine glycosylation is present at asparagine 1215. O-linked (GalNAc...) threonine glycans are attached at residues threonine 1243, threonine 1245, threonine 1249, threonine 1250, threonine 1251, threonine 1252, threonine 1256, threonine 1257, threonine 1259, threonine 1263, threonine 1270, threonine 1283, threonine 1284, threonine 1285, threonine 1298, threonine 1299, threonine 1304, threonine 1305, threonine 1318, and threonine 1319. The span at threonine 1243–serine 1264 shows a compositional bias: low complexity. Residues arginine 1265–proline 1296 are compositionally biased toward polar residues. Residues serine 1297–serine 1312 show a composition bias toward low complexity. A compositionally biased stretch (polar residues) spans threonine 1318 to proline 1353. N-linked (GlcNAc...) asparagine glycosylation occurs at asparagine 1339. 11 O-linked (GalNAc...) threonine glycosylation sites follow: threonine 1341, threonine 1342, threonine 1355, threonine 1356, threonine 1365, threonine 1368, threonine 1372, threonine 1375, threonine 1376, threonine 1377, and threonine 1379. Low complexity predominate over residues serine 1354–valine 1390. 2 stretches are compositionally biased toward polar residues: residues leucine 1391–valine 1400 and leucine 1413–proline 1477. Residue asparagine 1396 is glycosylated (N-linked (GlcNAc...) asparagine). Threonine 1426, threonine 1430, threonine 1431, threonine 1440, threonine 1451, threonine 1453, threonine 1464, threonine 1465, and threonine 1466 each carry an O-linked (GalNAc...) threonine glycan. Asparagine 1471 carries an N-linked (GlcNAc...) asparagine glycan. Positions serine 1478 to threonine 1489 are enriched in low complexity. O-linked (GalNAc...) threonine glycans are attached at residues threonine 1479, threonine 1480, threonine 1499, and threonine 1512. Polar residues-rich tracts occupy residues glutamine 1490–valine 1524 and leucine 1537–glutamine 1553. Residue asparagine 1520 is glycosylated (N-linked (GlcNAc...) asparagine). Threonine 1554, threonine 1555, threonine 1557, and threonine 1562 each carry an O-linked (GalNAc...) threonine glycan. Residues threonine 1554 to serine 1569 are compositionally biased toward low complexity. Residues arginine 1570–glutamate 1587 are compositionally biased toward polar residues. O-linked (GalNAc...) threonine glycosylation is found at threonine 1588, threonine 1589, threonine 1590, threonine 1604, threonine 1609, threonine 1627, threonine 1635, and threonine 1636. A compositionally biased stretch (low complexity) spans threonine 1588–threonine 1609. Residues alanine 1610–threonine 1647 show a composition bias toward polar residues. Asparagine 1644 carries an N-linked (GlcNAc...) asparagine glycan. Low complexity predominate over residues lysine 1670 to serine 1693. O-linked (GalNAc...) threonine glycosylation is found at threonine 1672, threonine 1674, threonine 1678, threonine 1679, threonine 1680, threonine 1681, threonine 1685, threonine 1686, threonine 1688, threonine 1699, and threonine 1714. The span at arginine 1694 to proline 1725 shows a compositional bias: polar residues. An N-linked (GlcNAc...) asparagine glycan is attached at asparagine 1721. A compositionally biased stretch (low complexity) spans serine 1726–glycine 1742. Positions threonine 1747 to glutamate 1837 are enriched in polar residues. N-linked (GlcNAc...) asparagine glycosylation is present at asparagine 1770. 9 O-linked (GalNAc...) threonine glycosylation sites follow: threonine 1838, threonine 1839, threonine 1840, threonine 1854, threonine 1873, threonine 1874, threonine 1888, threonine 1889, and threonine 1891. The segment covering threonine 1838–threonine 1859 has biased composition (low complexity). The span at alanine 1860–valine 1877 shows a compositional bias: polar residues. Positions threonine 1878–glutamine 1895 are enriched in low complexity. An N-linked (GlcNAc...) asparagine glycan is attached at asparagine 1896. Residues asparagine 1896–asparagine 1927 are compositionally biased toward polar residues. The span at proline 1928–serine 1945 shows a compositional bias: low complexity. 11 O-linked (GalNAc...) threonine glycosylation sites follow: threonine 1930, threonine 1931, threonine 1932, threonine 1933, threonine 1937, threonine 1938, threonine 1940, threonine 1964, threonine 1965, threonine 1966, and threonine 1980. Polar residues predominate over residues tyrosine 1946–threonine 1992. The N-linked (GlcNAc...) asparagine glycan is linked to asparagine 2022. The span at serine 2037–glutamine 2055 shows a compositional bias: polar residues. Disordered regions lie at residues serine 2037–histidine 2107, glutamine 2139–proline 2185, threonine 2205–serine 2237, and threonine 2262–leucine 2368. 2 O-linked (GalNAc...) threonine glycosylation sites follow: threonine 2056 and threonine 2057. Positions threonine 2056–serine 2071 are enriched in low complexity. A compositionally biased stretch (polar residues) spans arginine 2072–glycine 2089. O-linked (GalNAc...) threonine glycosylation is found at threonine 2090, threonine 2091, and threonine 2092. Over residues threonine 2090–histidine 2107 the composition is skewed to low complexity. The N-linked (GlcNAc...) asparagine glycan is linked to asparagine 2104. Threonine 2105 and threonine 2106 each carry an O-linked (GalNAc...) threonine glycan. N-linked (GlcNAc...) asparagine glycans are attached at residues asparagine 2148, asparagine 2182, and asparagine 2225. 2 stretches are compositionally biased toward polar residues: residues threonine 2205–alanine 2229 and threonine 2262–isoleucine 2303. 5 O-linked (GalNAc...) threonine glycosylation sites follow: threonine 2264, threonine 2352, threonine 2354, threonine 2359, and threonine 2360. Positions threonine 2344–proline 2367 are enriched in low complexity. Residues proline 2458–glutamate 2613 enclose the NIDO domain. Residues glutamate 2614–arginine 2726 enclose the AMOP domain. Positions arginine 2738–leucine 2937 constitute a VWFD domain. N-linked (GlcNAc...) asparagine glycosylation is found at asparagine 2755, asparagine 2773, asparagine 2801, asparagine 2827, asparagine 2844, asparagine 2853, asparagine 2888, asparagine 2909, asparagine 2916, asparagine 2932, asparagine 2958, asparagine 2985, asparagine 3003, asparagine 3014, asparagine 3054, asparagine 3079, asparagine 3102, asparagine 3109, asparagine 3157, and asparagine 3174. The EGF-like 1 domain occupies proline 3173–phenylalanine 3212. 3 disulfide bridges follow: cysteine 3177–cysteine 3188, cysteine 3182–cysteine 3200, and cysteine 3202–cysteine 3211. N-linked (GlcNAc...) asparagine glycans are attached at residues asparagine 3240, asparagine 3247, and asparagine 3353. Residues valine 3382–glutamate 3421 enclose the EGF-like 2 domain. Disulfide bonds link cysteine 3385/cysteine 3396, cysteine 3390/cysteine 3405, and cysteine 3407/cysteine 3420. Residues glycine 3432–phenylalanine 3452 traverse the membrane as a helical segment.

A heterodimeric complex, composed of a mucin-4 alpha chain and a cysteine-rich transmembrane mucin-4 beta chain. Mucin-4 beta chain interacts with ERBB2 via the EGF-like domain 1. In nonpolarized cells, associates with ERBB2 and ERBB3. Proteolytically cleaved into 2 chains, mucin-4 alpha chain and mucin-4 beta chain. Post-translationally, highly O-glycosylated. In terms of processing, predominantly N-glycosylated. In terms of tissue distribution, expressed in trachea, duodenum and intestine. Lower expression in stomach, salivary glands, liver, gallbladder, and kidney.

The protein localises to the cell membrane. Its subcellular location is the secreted. Functionally, membrane-bound mucin, a family of highly glycosylated proteins that constitute the major component of the mucus, the slimy and viscous secretion covering epithelial surfaces. These glycoproteins play important roles in the protection of the epithelium and are implicated in epithelial renewal and differentiation. Regulates cellular behavior through both anti-adhesive effects on cell-cell and cell-extracellular matrix interactions and its ability to act as an intramembrane ligand for ERBB2. Plays an important role in proliferation and differentiation of epithelial cells by inducing specific phosphorylation of ERBB2. In polarized epithelial cells, segregates ERBB2 and other ERBB receptors and prevents ERBB2 from acting as a coreceptor. The interaction with ERBB2 leads to enhanced expression of CDKN1B. The formation of a MUC4-ERBB2-ERBB3-NRG1 complex leads to down-regulation of CDKN1B, resulting in repression of apoptosis and stimulation of proliferation. Its ability to promote tumor growth may be mainly due to repression of apoptosis as opposed to proliferation. The polypeptide is Mucin-4 (Muc4) (Mus musculus (Mouse)).